The primary structure comprises 1339 residues: MRATGTLQVLCFLLSLARGSEMGNSQAVCPGTLNGLSVTGDADNQYQTLYKLYEKCEVVMGNLEIVLTGHNADLSFLQWIREVTGYVLVAMNEFSVLPLPNLRVVRGTQVYDGKFAIFVMLNYNTNSSHALRQLKFTQLTEILSGGVYIEKNDKLCHMDTIDWRDIVRVRGAEIVVKNNGANCPPCHEVCKGRCWGPGPDDCQILTKTICAPQCNGRCFGPNPNQCCHDECAGGCSGPQDTDCFACRRFNDSGACVPRCPEPLVYNKLTFQLEPNPHTKYQYGGVCVASCPHNFVVDQTFCVRACPPDKMEVDKHGLKMCEPCGGLCPKACEGTGSGSRYQTVDSSNIDGFVNCTKILGNLDFLITGLNVDPWHKIPALDPEKLNVFRTVREITGYLNIQSWPPHMHNFSVFSNLTTIGGRSLYNRGFSLLIMKNLNVTSLGFRSLKEISAGRVYISANQQLCYHHSLNWTRLLRGPSEERLDIKYDRPLGECLAEGKVCDPLCSSGGCWGPGPGQCLSCRNYSREGVCVTHCNFLQGEPREFVHEAQCFSCHPECLPMEGTSTCNGSGSDACARCAHFRDGPHCVNSCPHGILGAKGPIYKYPDAQNECRPCHENCTQGCNGPELQDCLGQAEVLMSKPHLVIAVTVGLAVILMILGGSFLYWRGRRIQNKRAMRRYLERGESIEPLDPSEKANKVLARIFKETELRKLKVLGSGVFGTVHKGIWIPEGESIKIPVCIKVIEDKSGRQSFQAVTDHMLAVGSLDHAHIVRLLGLCPGSSLQLVTQYLPLGSLLDHVKQHRETLGPQLLLNWGVQIAKGMYYLEEHSMVHRDLALRNVMLKSPSQVQVADFGVADLLPPDDKQLLHSEAKTPIKWMALESIHFGKYTHQSDVWSYGVTVWELMTFGAEPYAGLRLAEIPDLLEKGERLAQPQICTIDVYMVMVKCWMIDENIRPTFKELANEFTRMARDPPRYLVIKRASGPGTPPAAEPSVLTTKELQEAELEPELDLDLDLEAEEEGLATSLGSALSLPTGTLTRPRGSQSLLSPSSGYMPMNQSSLGEACLDSAVLGGREQFSRPISLHPIPRGRPASESSEGHVTGSEAELQEKVSVCRSRSRSRSPRPRGDSAYHSQRHSLLTPVTPLSPPGLEEEDGNGYVMPDTHLRGASSSREGTLSSVGLSSVLGTEEEDEDEEYEYMNRKRRGSPPRPPRPGSLEELGYEYMDVGSDLSASLGSTQSCPLHPMAIVPSAGTTPDEDYEYMNRRRGAGGAGGDYAAMGACPAAEQGYEEMRAFQGPGHHAPHVRYARLKTLRSLEATDSAFDNPDYWHSRLFPKANAQRT.

Residues 1-19 form the signal peptide; sequence MRATGTLQVLCFLLSLARG. The Extracellular segment spans residues 20–643; it reads SEMGNSQAVC…EVLMSKPHLV (624 aa). Asn-126 carries N-linked (GlcNAc...) asparagine glycosylation. 11 disulfides stabilise this stretch: Cys-186-Cys-194, Cys-190-Cys-202, Cys-210-Cys-218, Cys-214-Cys-226, Cys-227-Cys-235, Cys-231-Cys-243, Cys-246-Cys-255, Cys-259-Cys-286, Cys-290-Cys-301, Cys-305-Cys-320, and Cys-323-Cys-327. A glycan (N-linked (GlcNAc...) asparagine) is linked at Asn-250. N-linked (GlcNAc...) asparagine glycans are attached at residues Asn-353, Asn-408, Asn-414, Asn-437, and Asn-469. Disulfide bonds link Cys-500–Cys-509, Cys-504–Cys-517, Cys-520–Cys-529, Cys-533–Cys-549, Cys-552–Cys-565, Cys-556–Cys-573, Cys-576–Cys-585, Cys-589–Cys-610, Cys-613–Cys-621, and Cys-617–Cys-629. N-linked (GlcNAc...) asparagine glycosylation occurs at Asn-522. Asn-566 carries N-linked (GlcNAc...) asparagine glycosylation. Asn-616 carries an N-linked (GlcNAc...) asparagine glycan. The chain crosses the membrane as a helical span at residues 644 to 662; it reads IAVTVGLAVILMILGGSFL. At 663–1339 the chain is on the cytoplasmic side; that stretch reads YWRGRRIQNK…LFPKANAQRT (677 aa). Position 684 is a phosphoserine (Ser-684). The 258-residue stretch at 707–964 folds into the Protein kinase domain; the sequence is LRKLKVLGSG…TFKELANEFT (258 aa). Residues 713–721, Lys-740, 786–788, and 832–837 each bind ATP; these read LGSGVFGTV, QYL, and DLALRN. Residue Asp-832 is the Proton acceptor of the active site. Ser-980 carries the phosphoserine modification. Residues 1023 to 1036 are compositionally biased toward low complexity; sequence SLGSALSLPTGTLT. Disordered regions lie at residues 1023 to 1052 and 1078 to 1215; these read SLGS…SGYM and PISL…GSLE. Residues 1039-1052 show a composition bias toward polar residues; it reads RGSQSLLSPSSGYM. The span at 1172–1184 shows a compositional bias: low complexity; sequence GTLSSVGLSSVLG. Residues 1185–1195 show a composition bias toward acidic residues; sequence TEEEDEDEEYE.

This sequence belongs to the protein kinase superfamily. Tyr protein kinase family. EGF receptor subfamily. In terms of assembly, monomer and homodimer. Heterodimer with each of the other ERBB receptors (Potential). Interacts with CSPG5, PA2G4, GRB7, MYOC and MUC1. Found in a ternary complex with NRG1 and ITGAV:ITGB3 or ITGA6:ITGB4. Post-translationally, autophosphorylated. Ligand-binding increases phosphorylation on tyrosine residues and promotes its association with the p85 subunit of phosphatidylinositol 3-kinase.

Its subcellular location is the membrane. The enzyme catalyses L-tyrosyl-[protein] + ATP = O-phospho-L-tyrosyl-[protein] + ADP + H(+). In terms of biological role, tyrosine-protein kinase that plays an essential role as cell surface receptor for neuregulins. Binds to neuregulin-1 (NRG1) and is activated by it; ligand-binding increases phosphorylation on tyrosine residues and promotes its association with the p85 subunit of phosphatidylinositol 3-kinase. May also be activated by CSPG5. Involved in the regulation of myeloid cell differentiation. This is Receptor tyrosine-protein kinase erbB-3 (Erbb3) from Rattus norvegicus (Rat).